The primary structure comprises 93 residues: Hematopoietic cell signal transducer (93 aa).

An N-terminal signal peptide occupies residues 1 to 18 (MIHLGHILFLLLLPVAAA). Topologically, residues 19 to 48 (QTTPGERSSLPAFYPGTSGSCSGCGSLSLP) are extracellular. A helical transmembrane segment spans residues 49–69 (LLAGLVAADAVASLLIVGAVF). The Cytoplasmic portion of the chain corresponds to 70–93 (LCARPRRSPAQEDGKVYINMPGRG). The residue at position 86 (Y86) is a Phosphotyrosine. Residues 86-88 (YIN) form a GRB2 binding site region. The interval 86 to 89 (YINM) is PIK3R1 binding site.

Belongs to the DAP10 family. Interacts with CLEC5A. Forms an CLEC5A/TYROBP/HCST trimolecular complex depending almost solely on TYROBP. Homodimer; Disulfide-linked. Heterohexamer composed of four subunits of HCST/DAP10 and two subunits of KLRK1. Interacts (via transmembrane domain) with KLRK1 (via transmembrane domain); the interaction is required for KLRK1 NK cell surface and induces NK cell-mediated cytotoxicity. Interacts with PIK3R1 and GRB2. Interacts with CD300H. In terms of processing, phosphorylated; PIK3R1 and GRB2 associate specifically with tyrosine-phosphorylated HCST. Post-translationally, O-glycosylated. As to expression, predominantly expressed in hemopoietic cells such as NK cells, subset of T-cells and monocytes. Detected in leukocytes, spleen, and thymus.

The protein resides in the membrane. Functionally, transmembrane adapter protein which associates with KLRK1 to form an activation receptor KLRK1-HCST in lymphoid and myeloid cells; this receptor plays a major role in triggering cytotoxicity against target cells expressing cell surface ligands such as MHC class I chain-related MICA and MICB, and UL16-binding proteins (ULBPs); these ligands are up-regulated by stress conditions and pathological state such as viral infection and tumor transformation. Functions as a docking site for PI3-kinase PIK3R1 and GRB2. Interaction of ULBPs with KLRK1-HCST triggers calcium mobilization and activation of the PIK3R1, MAP2K/ERK, and JAK2/STAT5 signaling pathways. Both PIK3R1 and GRB2 are required for full KLRK1-HCST-mediated activation and ultimate killing of target cells. In NK cells, KLRK1-HCST signaling directly induces cytotoxicity and enhances cytokine production initiated via DAP12/TYROBP-associated receptors. In T-cells, it provides primarily costimulation for TCR-induced signals. KLRK1-HCST receptor plays a role in immune surveillance against tumors and is required for cytolysis of tumors cells; indeed, melanoma cells that do not express KLRK1 ligands escape from immune surveillance mediated by NK cells. This chain is Hematopoietic cell signal transducer (HCST), found in Homo sapiens (Human).